Here is a 211-residue protein sequence, read N- to C-terminus: Large ribosomal subunit protein uL3 (211 aa).

A disordered region spans residues 134–155; sequence ATHGNSLSHRAPGSIGQNQTPG. Gln-152 carries the N5-methylglutamine modification.

It belongs to the universal ribosomal protein uL3 family. Part of the 50S ribosomal subunit. Forms a cluster with proteins L14 and L19. In terms of processing, methylated by PrmB.

Functionally, one of the primary rRNA binding proteins, it binds directly near the 3'-end of the 23S rRNA, where it nucleates assembly of the 50S subunit. In Methylococcus capsulatus (strain ATCC 33009 / NCIMB 11132 / Bath), this protein is Large ribosomal subunit protein uL3.